The following is a 141-amino-acid chain: Lutropin subunit beta (141 aa).

Residues Met-1–Ala-20 form the signal peptide. Disulfide bonds link Cys-29–Cys-77, Cys-43–Cys-92, Cys-54–Cys-108, Cys-58–Cys-110, and Cys-113–Cys-120. The N-linked (GlcNAc...) asparagine glycan is linked to Asn-33.

This sequence belongs to the glycoprotein hormones subunit beta family. In terms of assembly, heterodimer of a common alpha chain and a unique beta chain which confers biological specificity to thyrotropin, lutropin, follitropin and gonadotropin.

It is found in the secreted. Its function is as follows. Promotes spermatogenesis and ovulation by stimulating the testes and ovaries to synthesize steroids. The protein is Lutropin subunit beta (Lhb) of Mus musculus (Mouse).